A 333-amino-acid chain; its full sequence is 4-hydroxy-3-methylbut-2-enyl diphosphate reductase (333 aa).

[4Fe-4S] cluster is bound at residue Cys-20. His-49 and His-82 together coordinate (2E)-4-hydroxy-3-methylbut-2-enyl diphosphate. The dimethylallyl diphosphate site is built by His-49 and His-82. Residues His-49 and His-82 each coordinate isopentenyl diphosphate. Cys-104 is a [4Fe-4S] cluster binding site. Position 132 (His-132) interacts with (2E)-4-hydroxy-3-methylbut-2-enyl diphosphate. Dimethylallyl diphosphate is bound at residue His-132. An isopentenyl diphosphate-binding site is contributed by His-132. The active-site Proton donor is the Glu-134. Thr-172 is a binding site for (2E)-4-hydroxy-3-methylbut-2-enyl diphosphate. Cys-202 provides a ligand contact to [4Fe-4S] cluster. Ser-230, Ser-231, Asn-232, and Ser-274 together coordinate (2E)-4-hydroxy-3-methylbut-2-enyl diphosphate. Dimethylallyl diphosphate is bound by residues Ser-230, Ser-231, Asn-232, and Ser-274. The isopentenyl diphosphate site is built by Ser-230, Ser-231, Asn-232, and Ser-274.

This sequence belongs to the IspH family. Requires [4Fe-4S] cluster as cofactor.

It catalyses the reaction isopentenyl diphosphate + 2 oxidized [2Fe-2S]-[ferredoxin] + H2O = (2E)-4-hydroxy-3-methylbut-2-enyl diphosphate + 2 reduced [2Fe-2S]-[ferredoxin] + 2 H(+). It carries out the reaction dimethylallyl diphosphate + 2 oxidized [2Fe-2S]-[ferredoxin] + H2O = (2E)-4-hydroxy-3-methylbut-2-enyl diphosphate + 2 reduced [2Fe-2S]-[ferredoxin] + 2 H(+). The protein operates within isoprenoid biosynthesis; dimethylallyl diphosphate biosynthesis; dimethylallyl diphosphate from (2E)-4-hydroxy-3-methylbutenyl diphosphate: step 1/1. It participates in isoprenoid biosynthesis; isopentenyl diphosphate biosynthesis via DXP pathway; isopentenyl diphosphate from 1-deoxy-D-xylulose 5-phosphate: step 6/6. Functionally, catalyzes the conversion of 1-hydroxy-2-methyl-2-(E)-butenyl 4-diphosphate (HMBPP) into a mixture of isopentenyl diphosphate (IPP) and dimethylallyl diphosphate (DMAPP). Acts in the terminal step of the DOXP/MEP pathway for isoprenoid precursor biosynthesis. The chain is 4-hydroxy-3-methylbut-2-enyl diphosphate reductase from Polaromonas sp. (strain JS666 / ATCC BAA-500).